A 218-amino-acid chain; its full sequence is 1-Cys peroxiredoxin PER1 (218 aa).

Residues Leu-4–Thr-164 form the Thioredoxin domain. Cys-46 serves as the catalytic Cysteine sulfenic acid (-SOH) intermediate. Residues Lys-194–Lys-217 carry the Bipartite nuclear localization signal motif.

The protein belongs to the peroxiredoxin family. Prx6 subfamily.

Its subcellular location is the nucleus. The protein localises to the cytoplasm. It catalyses the reaction a hydroperoxide + [thioredoxin]-dithiol = an alcohol + [thioredoxin]-disulfide + H2O. In terms of biological role, thiol-specific peroxidase that catalyzes the reduction of hydrogen peroxide and organic hydroperoxides to water and alcohols, respectively. Seems to contribute to the inhibition of germination during stress. The protein is 1-Cys peroxiredoxin PER1 (PER1) of Triticum aestivum (Wheat).